Reading from the N-terminus, the 154-residue chain is 6,7-dimethyl-8-ribityllumazine synthase (154 aa).

Residues Phe-22, Ser-56–Glu-58, and Ala-80–Ile-82 contribute to the 5-amino-6-(D-ribitylamino)uracil site. Ser-85–Thr-86 lines the (2S)-2-hydroxy-3-oxobutyl phosphate pocket. His-88 acts as the Proton donor in catalysis. Tyr-113 lines the 5-amino-6-(D-ribitylamino)uracil pocket. (2S)-2-hydroxy-3-oxobutyl phosphate is bound at residue Arg-127.

The protein belongs to the DMRL synthase family. In terms of assembly, forms an icosahedral capsid composed of 60 subunits, arranged as a dodecamer of pentamers.

The catalysed reaction is (2S)-2-hydroxy-3-oxobutyl phosphate + 5-amino-6-(D-ribitylamino)uracil = 6,7-dimethyl-8-(1-D-ribityl)lumazine + phosphate + 2 H2O + H(+). The protein operates within cofactor biosynthesis; riboflavin biosynthesis; riboflavin from 2-hydroxy-3-oxobutyl phosphate and 5-amino-6-(D-ribitylamino)uracil: step 1/2. In terms of biological role, catalyzes the formation of 6,7-dimethyl-8-ribityllumazine by condensation of 5-amino-6-(D-ribitylamino)uracil with 3,4-dihydroxy-2-butanone 4-phosphate. This is the penultimate step in the biosynthesis of riboflavin. In Persephonella marina (strain DSM 14350 / EX-H1), this protein is 6,7-dimethyl-8-ribityllumazine synthase.